Reading from the N-terminus, the 275-residue chain is NH(3)-dependent NAD(+) synthetase (275 aa).

47 to 54 (GISGGQDS) provides a ligand contact to ATP. Aspartate 53 contacts Mg(2+). Deamido-NAD(+) is bound at residue arginine 139. Threonine 159 is a binding site for ATP. Residue glutamate 164 coordinates Mg(2+). The deamido-NAD(+) site is built by lysine 172 and aspartate 179. Residues lysine 188 and threonine 210 each coordinate ATP. Residue 259-260 (HK) coordinates deamido-NAD(+).

It belongs to the NAD synthetase family. As to quaternary structure, homodimer.

It catalyses the reaction deamido-NAD(+) + NH4(+) + ATP = AMP + diphosphate + NAD(+) + H(+). Its pathway is cofactor biosynthesis; NAD(+) biosynthesis; NAD(+) from deamido-NAD(+) (ammonia route): step 1/1. Functionally, catalyzes the ATP-dependent amidation of deamido-NAD to form NAD. Uses ammonia as a nitrogen source. This chain is NH(3)-dependent NAD(+) synthetase, found in Staphylococcus epidermidis (strain ATCC 35984 / DSM 28319 / BCRC 17069 / CCUG 31568 / BM 3577 / RP62A).